The sequence spans 843 residues: Protein P (843 aa).

Positions 1-177 are terminal protein domain (TP); it reads MPLSYQHFRK…FCGSPYSWEQ (177 aa). A spacer region spans residues 178-346; it reads ELQHGRLVLQ…HCLFHIVNLI (169 aa). Disordered stretches follow at residues 221 to 240 and 289 to 315; these read SRLG…QGGS and VSTS…SRSQ. A compositionally biased stretch (low complexity) spans 223 to 235; the sequence is LGPQPTQGQLAGL. The polymerase/reverse transcriptase domain (RT) stretch occupies residues 347–690; that stretch reads DDWGPCAEHG…YLNLYPVARQ (344 aa). Positions 357–600 constitute a Reverse transcriptase domain; that stretch reads EHRIRTPRTP…YSLNFMGYVI (244 aa). 3 residues coordinate Mg(2+): D429, D551, and D552.

This sequence belongs to the hepadnaviridae P protein family.

The catalysed reaction is DNA(n) + a 2'-deoxyribonucleoside 5'-triphosphate = DNA(n+1) + diphosphate. The enzyme catalyses Endonucleolytic cleavage to 5'-phosphomonoester.. Activated by host HSP70 and HSP40 in vitro to be able to bind the epsilon loop of the pgRNA. Because deletion of the RNase H region renders the protein partly chaperone-independent, the chaperones may be needed indirectly to relieve occlusion of the RNA-binding site by this domain. Inhibited by several reverse-transcriptase inhibitors: Lamivudine, Adefovir and Entecavir. Functionally, multifunctional enzyme that converts the viral RNA genome into dsDNA in viral cytoplasmic capsids. This enzyme displays a DNA polymerase activity that can copy either DNA or RNA templates, and a ribonuclease H (RNase H) activity that cleaves the RNA strand of RNA-DNA heteroduplexes in a partially processive 3'- to 5'-endonucleasic mode. Neo-synthesized pregenomic RNA (pgRNA) are encapsidated together with the P protein, and reverse-transcribed inside the nucleocapsid. Initiation of reverse-transcription occurs first by binding the epsilon loop on the pgRNA genome, and is initiated by protein priming, thereby the 5'-end of (-)DNA is covalently linked to P protein. Partial (+)DNA is synthesized from the (-)DNA template and generates the relaxed circular DNA (RC-DNA) genome. After budding and infection, the RC-DNA migrates in the nucleus, and is converted into a plasmid-like covalently closed circular DNA (cccDNA). The activity of P protein does not seem to be necessary for cccDNA generation, and is presumably released from (+)DNA by host nuclear DNA repair machinery. This Homo sapiens (Human) protein is Protein P.